The chain runs to 456 residues: Bifunctional protein GlmU (456 aa).

Residues 1–231 (MERTCLAIIL…EEELTGCNTR (231 aa)) form a pyrophosphorylase region. UDP-N-acetyl-alpha-D-glucosamine contacts are provided by residues 10–13 (LAAG), lysine 24, glutamine 77, and 82–83 (GT). Residue aspartate 107 coordinates Mg(2+). UDP-N-acetyl-alpha-D-glucosamine contacts are provided by glycine 143, glutamate 157, asparagine 172, and asparagine 229. Asparagine 229 provides a ligand contact to Mg(2+). The interval 232-252 (AELAYIERLWQQRRRHELMLA) is linker. Residues 253-456 (GVSMVAPETV…LARKIAKAAE (204 aa)) are N-acetyltransferase. Positions 318 and 336 each coordinate UDP-N-acetyl-alpha-D-glucosamine. Catalysis depends on histidine 348, which acts as the Proton acceptor. 2 residues coordinate UDP-N-acetyl-alpha-D-glucosamine: tyrosine 351 and asparagine 362. Residues alanine 365, 371–372 (NY), serine 390, serine 408, and arginine 425 each bind acetyl-CoA.

It in the N-terminal section; belongs to the N-acetylglucosamine-1-phosphate uridyltransferase family. In the C-terminal section; belongs to the transferase hexapeptide repeat family. As to quaternary structure, homotrimer. Requires Mg(2+) as cofactor.

The protein resides in the cytoplasm. It catalyses the reaction alpha-D-glucosamine 1-phosphate + acetyl-CoA = N-acetyl-alpha-D-glucosamine 1-phosphate + CoA + H(+). The enzyme catalyses N-acetyl-alpha-D-glucosamine 1-phosphate + UTP + H(+) = UDP-N-acetyl-alpha-D-glucosamine + diphosphate. It functions in the pathway nucleotide-sugar biosynthesis; UDP-N-acetyl-alpha-D-glucosamine biosynthesis; N-acetyl-alpha-D-glucosamine 1-phosphate from alpha-D-glucosamine 6-phosphate (route II): step 2/2. It participates in nucleotide-sugar biosynthesis; UDP-N-acetyl-alpha-D-glucosamine biosynthesis; UDP-N-acetyl-alpha-D-glucosamine from N-acetyl-alpha-D-glucosamine 1-phosphate: step 1/1. Its pathway is bacterial outer membrane biogenesis; LPS lipid A biosynthesis. Functionally, catalyzes the last two sequential reactions in the de novo biosynthetic pathway for UDP-N-acetylglucosamine (UDP-GlcNAc). The C-terminal domain catalyzes the transfer of acetyl group from acetyl coenzyme A to glucosamine-1-phosphate (GlcN-1-P) to produce N-acetylglucosamine-1-phosphate (GlcNAc-1-P), which is converted into UDP-GlcNAc by the transfer of uridine 5-monophosphate (from uridine 5-triphosphate), a reaction catalyzed by the N-terminal domain. The sequence is that of Bifunctional protein GlmU from Sinorhizobium medicae (strain WSM419) (Ensifer medicae).